The chain runs to 483 residues: 5-hydroxytryptamine receptor 3A (483 aa).

The signal sequence occupies residues 1-23 (MPLCIPQVLLALFLSVLIAQGEG). At 24–246 (SRRRATQAHS…MKFYVVIRRR (223 aa)) the chain is on the extracellular side. N-linked (GlcNAc...) asparagine glycosylation is found at Asn109, Asn175, and Asn191. An intrachain disulfide couples Cys162 to Cys176. A helical transmembrane segment spans residues 247–273 (PLFYAVSLLLPSIFLMVVDIVGFCLPP). Residues 274 to 278 (DSGER) are Cytoplasmic-facing. A helical membrane pass occupies residues 279-297 (VSFKITLLLGYSVFLIIVS). The Extracellular portion of the chain corresponds to 298–307 (DTLPATAIGT). The helical transmembrane segment at 308–326 (PLIGVYFVVCMALLVISLA) threads the bilayer. Residues 327 to 460 (ETIFIVQLVH…GYVLDRLLFR (134 aa)) lie on the Cytoplasmic side of the membrane. The interval 393–414 (VGSPQDLEKTSRSRDSPLPPPR) is disordered. Basic and acidic residues predominate over residues 398–407 (DLEKTSRSRD). Residues 419–455 (AVRGLLQELSSIRHSLEKRDEMREVARDWLRVGYVLD) form an HA-stretch; determines single-channel conductance in 5-HT3 receptors region. Residues 461–480 (IYLLAVLAYSITLVTLWSIW) traverse the membrane as a helical segment. Residues 481-483 (HYS) lie on the Extracellular side of the membrane.

Belongs to the ligand-gated ion channel (TC 1.A.9) family. 5-hydroxytryptamine receptor (TC 1.A.9.2) subfamily. HTR3A sub-subfamily. Forms homopentameric as well as heteropentameric serotonin-activated cation-selective channel complexes with HTR3B or HTR3C or HTR3D or HTR3E. The homomeric complex is functional but exhibits low conductance with modified voltage dependence, and decreased agonist and antagonist affinity. Heteropentameric complexes display properties which resemble that of neuronal serotonin-activated channels in vivo. Interacts with RIC3. In terms of tissue distribution, expressed in central and peripheral neurons.

It localises to the postsynaptic cell membrane. The protein localises to the cell membrane. It catalyses the reaction Na(+)(in) = Na(+)(out). It carries out the reaction K(+)(in) = K(+)(out). The catalysed reaction is Ca(2+)(in) = Ca(2+)(out). The enzyme catalyses Mg(2+)(in) = Mg(2+)(out). In terms of biological role, forms serotonin (5-hydroxytryptamine/5-HT3)-activated cation-selective channel complexes, which when activated cause fast, depolarizing responses in neurons. This chain is 5-hydroxytryptamine receptor 3A, found in Rattus norvegicus (Rat).